Consider the following 126-residue polypeptide: Aspartate 1-decarboxylase (126 aa).

The Schiff-base intermediate with substrate; via pyruvic acid role is filled by serine 25. Position 25 is a pyruvic acid (Ser) (serine 25). Position 57 (threonine 57) interacts with substrate. The active-site Proton donor is tyrosine 58. 73 to 75 (GAA) is a substrate binding site.

It belongs to the PanD family. Heterooctamer of four alpha and four beta subunits. Pyruvate is required as a cofactor. Is synthesized initially as an inactive proenzyme, which is activated by self-cleavage at a specific serine bond to produce a beta-subunit with a hydroxyl group at its C-terminus and an alpha-subunit with a pyruvoyl group at its N-terminus.

Its subcellular location is the cytoplasm. The catalysed reaction is L-aspartate + H(+) = beta-alanine + CO2. Its pathway is cofactor biosynthesis; (R)-pantothenate biosynthesis; beta-alanine from L-aspartate: step 1/1. Catalyzes the pyruvoyl-dependent decarboxylation of aspartate to produce beta-alanine. In Serratia proteamaculans (strain 568), this protein is Aspartate 1-decarboxylase.